Consider the following 446-residue polypeptide: tRNA-2-methylthio-N(6)-dimethylallyladenosine synthase (446 aa).

The region spanning 3–120 (KKLFIETHGC…LPEMIDAARS (118 aa)) is the MTTase N-terminal domain. 6 residues coordinate [4Fe-4S] cluster: Cys-12, Cys-49, Cys-83, Cys-157, Cys-161, and Cys-164. Residues 143-375 (RVDGPTAFVS…QGRIHQQGYE (233 aa)) form the Radical SAM core domain. One can recognise a TRAM domain in the interval 378-442 (RRMVGSTQRI…PHSLRGTLIE (65 aa)).

Belongs to the methylthiotransferase family. MiaB subfamily. As to quaternary structure, monomer. It depends on [4Fe-4S] cluster as a cofactor.

Its subcellular location is the cytoplasm. The enzyme catalyses N(6)-dimethylallyladenosine(37) in tRNA + (sulfur carrier)-SH + AH2 + 2 S-adenosyl-L-methionine = 2-methylsulfanyl-N(6)-dimethylallyladenosine(37) in tRNA + (sulfur carrier)-H + 5'-deoxyadenosine + L-methionine + A + S-adenosyl-L-homocysteine + 2 H(+). Functionally, catalyzes the methylthiolation of N6-(dimethylallyl)adenosine (i(6)A), leading to the formation of 2-methylthio-N6-(dimethylallyl)adenosine (ms(2)i(6)A) at position 37 in tRNAs that read codons beginning with uridine. The polypeptide is tRNA-2-methylthio-N(6)-dimethylallyladenosine synthase (Pseudomonas paraeruginosa (strain DSM 24068 / PA7) (Pseudomonas aeruginosa (strain PA7))).